The following is a 267-amino-acid chain: 3-methyl-2-oxobutanoate hydroxymethyltransferase (267 aa).

2 residues coordinate Mg(2+): D45 and D84. 3-methyl-2-oxobutanoate contacts are provided by residues D45–S46, D84, and K113. E115 serves as a coordination point for Mg(2+). E182 functions as the Proton acceptor in the catalytic mechanism.

The protein belongs to the PanB family. As to quaternary structure, homodecamer; pentamer of dimers. Mg(2+) is required as a cofactor.

It localises to the cytoplasm. The enzyme catalyses 3-methyl-2-oxobutanoate + (6R)-5,10-methylene-5,6,7,8-tetrahydrofolate + H2O = 2-dehydropantoate + (6S)-5,6,7,8-tetrahydrofolate. Its pathway is cofactor biosynthesis; coenzyme A biosynthesis. In terms of biological role, catalyzes the reversible reaction in which hydroxymethyl group from 5,10-methylenetetrahydrofolate is transferred onto alpha-ketoisovalerate to form ketopantoate. The polypeptide is 3-methyl-2-oxobutanoate hydroxymethyltransferase (Saccharolobus islandicus (strain Y.N.15.51 / Yellowstone #2) (Sulfolobus islandicus)).